Reading from the N-terminus, the 262-residue chain is ABSCISIC ACID-INSENSITIVE 5-like protein 3 (262 aa).

3 positions are modified to phosphoserine: Ser21, Ser43, and Ser66. At Thr104 the chain carries Phosphothreonine. In terms of domain architecture, bZIP spans 190 to 253 (VERRQKRMIK…SEPPPDPKWK (64 aa)). The interval 192 to 211 (RRQKRMIKNRESAARSRARK) is basic motif. The tract at residues 218 to 232 (LEIKVSRLEEENEKL) is leucine-zipper. A compositionally biased stretch (basic and acidic residues) spans 239–252 (EKILPSEPPPDPKW). A disordered region spans residues 239 to 262 (EKILPSEPPPDPKWKLRRTNSASL).

It belongs to the bZIP family. ABI5 subfamily. DNA-binding heterodimer with ABI5/DPBF1, DPBF2 or AREB3/DPBF3. Interacts with the AFP proteins AFP2, AFP3 and AFP4. As to expression, predominantly expressed in seeds.

It is found in the nucleus. Its function is as follows. Binds to the embryo specification element and the ABA-responsive element (ABRE) of the Dc3 gene promoter and to the ABRE of the Em1 gene promoter. Could participate in abscisic acid-regulated gene expression during seed development. The polypeptide is ABSCISIC ACID-INSENSITIVE 5-like protein 3 (DPBF4) (Arabidopsis thaliana (Mouse-ear cress)).